A 1228-amino-acid polypeptide reads, in one-letter code: S-layer protein (1228 aa).

The signal sequence occupies residues 1-30; sequence MDRKKAVKLATASAIAASAFVAANPNASEA.

The protein localises to the secreted. Its subcellular location is the cell wall. The protein resides in the S-layer. The S-layer is a paracrystalline mono-layered assembly of proteins which coat the surface of bacteria. This Geobacillus stearothermophilus (Bacillus stearothermophilus) protein is S-layer protein (sbsA).